Reading from the N-terminus, the 360-residue chain is Phospho-N-acetylmuramoyl-pentapeptide-transferase (360 aa).

10 consecutive transmembrane segments (helical) span residues Ala26–Asn46, Gly70–Trp90, Tyr97–Tyr117, Tyr134–Ile154, Gly167–Phe187, Gly199–Val219, Ala236–Phe256, Val263–Ile283, Ile288–Val308, and Val338–Lys358.

The protein belongs to the glycosyltransferase 4 family. MraY subfamily. It depends on Mg(2+) as a cofactor.

It localises to the cell inner membrane. The catalysed reaction is UDP-N-acetyl-alpha-D-muramoyl-L-alanyl-gamma-D-glutamyl-meso-2,6-diaminopimeloyl-D-alanyl-D-alanine + di-trans,octa-cis-undecaprenyl phosphate = di-trans,octa-cis-undecaprenyl diphospho-N-acetyl-alpha-D-muramoyl-L-alanyl-D-glutamyl-meso-2,6-diaminopimeloyl-D-alanyl-D-alanine + UMP. The protein operates within cell wall biogenesis; peptidoglycan biosynthesis. Functionally, catalyzes the initial step of the lipid cycle reactions in the biosynthesis of the cell wall peptidoglycan: transfers peptidoglycan precursor phospho-MurNAc-pentapeptide from UDP-MurNAc-pentapeptide onto the lipid carrier undecaprenyl phosphate, yielding undecaprenyl-pyrophosphoryl-MurNAc-pentapeptide, known as lipid I. This Saccharophagus degradans (strain 2-40 / ATCC 43961 / DSM 17024) protein is Phospho-N-acetylmuramoyl-pentapeptide-transferase.